The sequence spans 428 residues: Phosphomethylpyrimidine synthase 1 (428 aa).

Residues N65, M94, Y123, H158, S180–G182, D221–R224, and E260 contribute to the substrate site. Zn(2+) is bound at residue H264. Y287 contacts substrate. H328 is a Zn(2+) binding site. [4Fe-4S] cluster-binding residues include C405, C408, and C412.

Belongs to the ThiC family. It depends on [4Fe-4S] cluster as a cofactor.

The catalysed reaction is 5-amino-1-(5-phospho-beta-D-ribosyl)imidazole + S-adenosyl-L-methionine = 4-amino-2-methyl-5-(phosphooxymethyl)pyrimidine + CO + 5'-deoxyadenosine + formate + L-methionine + 3 H(+). It participates in cofactor biosynthesis; thiamine diphosphate biosynthesis. Its function is as follows. Catalyzes the synthesis of the hydroxymethylpyrimidine phosphate (HMP-P) moiety of thiamine from aminoimidazole ribotide (AIR) in a radical S-adenosyl-L-methionine (SAM)-dependent reaction. In Methanosarcina mazei (strain ATCC BAA-159 / DSM 3647 / Goe1 / Go1 / JCM 11833 / OCM 88) (Methanosarcina frisia), this protein is Phosphomethylpyrimidine synthase 1.